Consider the following 212-residue polypeptide: F420-dependent NADP reductase (212 aa).

NADP(+) contacts are provided by residues 9–12 (TGNL), 31–32 (SR), Lys-36, Ile-72, His-76, Val-98, and Ala-137. Leu-207 is a coenzyme F420-(gamma-Glu)n binding site.

This sequence belongs to the F420-dependent NADP reductase family. Homodimer.

The catalysed reaction is reduced coenzyme F420-(gamma-L-Glu)(n) + NADP(+) = oxidized coenzyme F420-(gamma-L-Glu)(n) + NADPH + 2 H(+). Its function is as follows. Catalyzes the reversible reduction of NADP(+) by F420H(2). In this reaction the proS hydrogen at C5 of F420 is transferred into the proS position at C4 of NADPH. The chain is F420-dependent NADP reductase (fno) from Archaeoglobus fulgidus (strain ATCC 49558 / DSM 4304 / JCM 9628 / NBRC 100126 / VC-16).